The chain runs to 688 residues: Chaperone protein dnaK1 (688 aa).

Residue Thr198 is modified to Phosphothreonine; by autocatalysis. Residues Asp630–Pro661 show a composition bias toward basic and acidic residues. The tract at residues Asp630–Leu688 is disordered.

Belongs to the heat shock protein 70 family.

Its function is as follows. Acts as a chaperone. The sequence is that of Chaperone protein dnaK1 (dnaK1) from Nostoc sp. (strain PCC 7120 / SAG 25.82 / UTEX 2576).